The following is a 473-amino-acid chain: ATP-dependent 6-phosphofructokinase 1 (473 aa).

S71 carries the phosphoserine modification. ATP is bound by residues G102, 165 to 166, and 190 to 193; these read RG and GDGS. D191 contributes to the Mg(2+) binding site. Residues 219–221, 264–266, E320, and 376–379 contribute to the substrate site; these read TID, MGR, and YMIR. D221 (proton acceptor) is an active-site residue.

This sequence belongs to the phosphofructokinase type A (PFKA) family. PPi-dependent PFK group II subfamily. Atypical ATP-dependent clade 'X' sub-subfamily. As to quaternary structure, homotetramer. It depends on Mg(2+) as a cofactor. In terms of tissue distribution, expressed in roots, leaves, stems and flowers.

It is found in the cytoplasm. It carries out the reaction beta-D-fructose 6-phosphate + ATP = beta-D-fructose 1,6-bisphosphate + ADP + H(+). It functions in the pathway carbohydrate degradation; glycolysis; D-glyceraldehyde 3-phosphate and glycerone phosphate from D-glucose: step 3/4. Allosterically activated by AMP. Its function is as follows. Catalyzes the phosphorylation of D-fructose 6-phosphate to fructose 1,6-bisphosphate by ATP, the first committing step of glycolysis. The sequence is that of ATP-dependent 6-phosphofructokinase 1 from Arabidopsis thaliana (Mouse-ear cress).